The following is a 567-amino-acid chain: MFS-type transporter poxA (567 aa).

Residues 1–23 show a composition bias toward basic and acidic residues; it reads MPASDRTSETGDVEKVTAAETPK. The interval 1 to 24 is disordered; it reads MPASDRTSETGDVEKVTAAETPKE. Transmembrane regions (helical) follow at residues 35–55, 77–97, 108–128, 141–161, 165–185, 197–217, 240–260, 271–291, 311–331, and 349–369; these read ALTG…LFLG, ADIG…QLLA, LVFL…GVAV, GAGA…VVPL, SLIL…GPVI, WCFY…ILFF, LAGC…LQWG, SATI…FLIW, IIAS…VGYF, and VMLL…GVIV. Asn-370 carries N-linked (GlcNAc...) asparagine glycosylation. Transmembrane regions (helical) follow at residues 372–392, 410–430, 436–456, and 515–535; these read TGYF…GSGL, ILQG…QVAL, LIPV…SIML, and AIAG…LVSF. The segment at 547–567 is disordered; it reads EENKKEAAEEEEEVKVAAVEA.

It belongs to the major facilitator superfamily. TCR/Tet family.

It localises to the cell membrane. Its function is as follows. MFS-type transporter; part of the gene cluster that mediates the biosynthesis of oxaleimides, cytotoxic compounds containing an unusual disubstituted succinimide moiety. The polypeptide is MFS-type transporter poxA (Penicillium oxalicum (strain 114-2 / CGMCC 5302) (Penicillium decumbens)).